The chain runs to 58 residues: COP9 signalosome complex subunit 6b (58 aa).

It belongs to the peptidase M67A family. CSN6 subfamily. In terms of assembly, component of the CSN complex, probably composed of CSN1, CSN2, CSN3, CSN4, CSN5 (CSN5A or CSN5B), CSN6 (CSN6A or CSN6B), CSN7 and CSN8.

The protein resides in the cytoplasm. It localises to the nucleus. Component of the COP9 signalosome complex (CSN), a complex involved in various cellular and developmental processes such as photomorphogenesis and auxin and jasmonate responses. The CSN complex is an essential regulator of the ubiquitin (Ubl) conjugation pathway by mediating the deneddylation of the cullin subunits of SCF-type E3 ligase complexes, leading to decrease the Ubl ligase activity of SCF. It is involved in repression of photomorphogenesis in darkness by regulating the activity of COP1-containing Ubl ligase complexes. The protein is COP9 signalosome complex subunit 6b (CSN6B) of Brassica oleracea (Wild cabbage).